Consider the following 131-residue polypeptide: D-ribose pyranase (131 aa).

The active-site Proton donor is the H20. Substrate contacts are provided by residues D28, H98, and 120 to 122 (YAN).

It belongs to the RbsD / FucU family. RbsD subfamily. As to quaternary structure, homodecamer.

Its subcellular location is the cytoplasm. It catalyses the reaction beta-D-ribopyranose = beta-D-ribofuranose. The protein operates within carbohydrate metabolism; D-ribose degradation; D-ribose 5-phosphate from beta-D-ribopyranose: step 1/2. Catalyzes the interconversion of beta-pyran and beta-furan forms of D-ribose. The protein is D-ribose pyranase of Bacillus velezensis (strain DSM 23117 / BGSC 10A6 / LMG 26770 / FZB42) (Bacillus amyloliquefaciens subsp. plantarum).